The primary structure comprises 372 residues: Anhydro-N-acetylmuramic acid kinase (372 aa).

18–25 (GTSLDGID) contacts ATP.

Belongs to the anhydro-N-acetylmuramic acid kinase family.

It catalyses the reaction 1,6-anhydro-N-acetyl-beta-muramate + ATP + H2O = N-acetyl-D-muramate 6-phosphate + ADP + H(+). It participates in amino-sugar metabolism; 1,6-anhydro-N-acetylmuramate degradation. It functions in the pathway cell wall biogenesis; peptidoglycan recycling. Its function is as follows. Catalyzes the specific phosphorylation of 1,6-anhydro-N-acetylmuramic acid (anhMurNAc) with the simultaneous cleavage of the 1,6-anhydro ring, generating MurNAc-6-P. Is required for the utilization of anhMurNAc either imported from the medium or derived from its own cell wall murein, and thus plays a role in cell wall recycling. This is Anhydro-N-acetylmuramic acid kinase from Thiobacillus denitrificans (strain ATCC 25259 / T1).